The primary structure comprises 65 residues: Ubiquinol-cytochrome-c reductase complex assembly factor 6 (65 aa).

The Mitochondrial matrix segment spans residues 1–9; that stretch reads MPAGVSWPR. A helical; Signal-anchor for type II membrane protein membrane pass occupies residues 10–32; sequence YLRMFAASVLSMFAGAQVVHHYY. Residues 33-65 lie on the Mitochondrial intermembrane side of the membrane; sequence RPDLSIPEIPPKPGELRTELLGLKERQMDSQKQ.

It belongs to the UQCC6 family. As to expression, highly expressed in skeletal and cardiac muscle (at protein level).

It is found in the mitochondrion inner membrane. In terms of biological role, required for the assembly and stability of the mitochondrial ubiquinol-cytochrome c reductase complex (complex III (CIII) or cytochrome b-c1 complex), a multisubunit transmembrane complex that is part of the mitochondrial electron transport chain (ETC) which drives oxidative phosphorylation. Mediates early complex III biogenesis. Participates in regulating the levels of electron transport chain proteins, and therefore energy supply, in response to changes in energy demand. Also required for cytochrome c oxidase complex (complex IV) assembly. This is Ubiquinol-cytochrome-c reductase complex assembly factor 6 (uqcc6) from Danio rerio (Zebrafish).